Reading from the N-terminus, the 214-residue chain is Orotate phosphoribosyltransferase (214 aa).

A 5-phospho-alpha-D-ribose 1-diphosphate-binding site is contributed by K26. Residue 34 to 35 (FF) coordinates orotate. 5-phospho-alpha-D-ribose 1-diphosphate-binding positions include 72-73 (YK), R99, K100, K103, H105, and 124-132 (DDVITAGTA). Residues T128 and R156 each contribute to the orotate site.

This sequence belongs to the purine/pyrimidine phosphoribosyltransferase family. PyrE subfamily. As to quaternary structure, homodimer. Mg(2+) is required as a cofactor.

It catalyses the reaction orotidine 5'-phosphate + diphosphate = orotate + 5-phospho-alpha-D-ribose 1-diphosphate. The protein operates within pyrimidine metabolism; UMP biosynthesis via de novo pathway; UMP from orotate: step 1/2. Catalyzes the transfer of a ribosyl phosphate group from 5-phosphoribose 1-diphosphate to orotate, leading to the formation of orotidine monophosphate (OMP). The polypeptide is Orotate phosphoribosyltransferase (Pseudoalteromonas translucida (strain TAC 125)).